The following is a 374-amino-acid chain: UPF0496 protein At4g34320 (374 aa).

2 consecutive transmembrane segments (helical) span residues 215–235 (IIFV…AAMA) and 238–258 (PVAA…GKWI).

It belongs to the UPF0496 family.

It localises to the membrane. The sequence is that of UPF0496 protein At4g34320 from Arabidopsis thaliana (Mouse-ear cress).